The primary structure comprises 306 residues: Ornithine carbamoyltransferase (306 aa).

Carbamoyl phosphate is bound by residues 50–53 (STRT), glutamine 77, arginine 101, and 128–131 (HPCQ). Residues asparagine 160, aspartate 224, and 228 to 229 (SM) contribute to the L-ornithine site. Residues 261–262 (CL) and arginine 289 contribute to the carbamoyl phosphate site.

Belongs to the aspartate/ornithine carbamoyltransferase superfamily. OTCase family.

The protein localises to the cytoplasm. It carries out the reaction carbamoyl phosphate + L-ornithine = L-citrulline + phosphate + H(+). It participates in amino-acid biosynthesis; L-arginine biosynthesis; L-arginine from L-ornithine and carbamoyl phosphate: step 1/3. Reversibly catalyzes the transfer of the carbamoyl group from carbamoyl phosphate (CP) to the N(epsilon) atom of ornithine (ORN) to produce L-citrulline. The sequence is that of Ornithine carbamoyltransferase from Aquifex aeolicus (strain VF5).